The sequence spans 245 residues: tRNA1(Val) (adenine(37)-N6)-methyltransferase (245 aa).

It belongs to the methyltransferase superfamily. tRNA (adenine-N(6)-)-methyltransferase family.

It is found in the cytoplasm. The enzyme catalyses adenosine(37) in tRNA1(Val) + S-adenosyl-L-methionine = N(6)-methyladenosine(37) in tRNA1(Val) + S-adenosyl-L-homocysteine + H(+). Its function is as follows. Specifically methylates the adenine in position 37 of tRNA(1)(Val) (anticodon cmo5UAC). This chain is tRNA1(Val) (adenine(37)-N6)-methyltransferase, found in Salmonella typhi.